We begin with the raw amino-acid sequence, 437 residues long: MASSSSFTYYCPPSSSPVWSEPLYSLRPEHVRERLQDDSVETVTSIEQAKVEEKIQEVFSSYKFNHLVPRLILQREKHFHYLKRGLRQLTDAYECLDASRPWLCYWILHSLELLDEPIPQIVATDVCQFLELCQSPDGGFGGGPGQYPHLAPTYAAVNALCIIGTEEAYNVINREKLLQYLYSLKQPDGSFLMHVGGEVDVRSAYCAASVASLTNIITPDLFEGTAEWIARCQNWEGGIGGVPGMEAHGGYTFCGLAALVILKKERSLNLKSLLQWVTSRQMRFEGGFQGRCNKLVDGCYSFWQAGLLPLLHRALHAQGDPALSMSHWMFHQQALQEYILMCCQCPAGGLLDKPGKSRDFYHTCYCLSGLSIAQHFGSGAMLHDMVMGVPENVLQPTHPVYNIGPEKVIQATTHFLQKPVPGFEECEDEVTSDPATD.

PFTB repeat units lie at residues alanine 123–glycine 164, arginine 174–asparagine 215, phenylalanine 222–lysine 263, leucine 270–histidine 312, and glutamine 332–glutamine 374. Residues histidine 248 to tyrosine 251 and arginine 291 to lysine 294 contribute to the (2E,6E)-farnesyl diphosphate site. Residues aspartate 297 and cysteine 299 each contribute to the Zn(2+) site. Tyrosine 300–tryptophan 303 contributes to the (2E,6E)-farnesyl diphosphate binding site. A Zn(2+)-binding site is contributed by histidine 362. Serine 432 carries the phosphoserine modification. Threonine 436 bears the Phosphothreonine mark.

This sequence belongs to the protein prenyltransferase subunit beta family. Heterodimer of FNTA and FNTB. Requires Zn(2+) as cofactor.

The catalysed reaction is L-cysteinyl-[protein] + (2E,6E)-farnesyl diphosphate = S-(2E,6E)-farnesyl-L-cysteinyl-[protein] + diphosphate. In terms of biological role, essential subunit of the farnesyltransferase complex. Catalyzes the transfer of a farnesyl moiety from farnesyl diphosphate to a cysteine at the fourth position from the C-terminus of several proteins having the C-terminal sequence Cys-aliphatic-aliphatic-X. This is Protein farnesyltransferase subunit beta (Fntb) from Mus musculus (Mouse).